A 360-amino-acid polypeptide reads, in one-letter code: Phospho-N-acetylmuramoyl-pentapeptide-transferase (360 aa).

10 helical membrane passes run 26–46 (AILGLMTALMFSLWWGPKMIA), 73–93 (TMGGLLILAGVFISVLLWGDL), 97–117 (YVWVVLFVLGSFGLIGFIDDY), 132–152 (WKYLLQSLAALLIAVYLYASA), 168–188 (VMPQLGGFFIVLVYFTIVGSS), 199–219 (GLAIMPTVMVAAAFALIAYLS), 236–256 (AGELVIVCTAIVGAGLGFLWF), 263–283 (VFMGDVGSLSLGAALGTIAVL), 288–308 (ILLVIMGGVFVMETVSVILQV), and 338–358 (VIVRFWIISLFLVLLGLATLK).

Belongs to the glycosyltransferase 4 family. MraY subfamily. It depends on Mg(2+) as a cofactor.

The protein localises to the cell inner membrane. The enzyme catalyses UDP-N-acetyl-alpha-D-muramoyl-L-alanyl-gamma-D-glutamyl-meso-2,6-diaminopimeloyl-D-alanyl-D-alanine + di-trans,octa-cis-undecaprenyl phosphate = di-trans,octa-cis-undecaprenyl diphospho-N-acetyl-alpha-D-muramoyl-L-alanyl-D-glutamyl-meso-2,6-diaminopimeloyl-D-alanyl-D-alanine + UMP. Its pathway is cell wall biogenesis; peptidoglycan biosynthesis. Catalyzes the initial step of the lipid cycle reactions in the biosynthesis of the cell wall peptidoglycan: transfers peptidoglycan precursor phospho-MurNAc-pentapeptide from UDP-MurNAc-pentapeptide onto the lipid carrier undecaprenyl phosphate, yielding undecaprenyl-pyrophosphoryl-MurNAc-pentapeptide, known as lipid I. This is Phospho-N-acetylmuramoyl-pentapeptide-transferase from Shewanella halifaxensis (strain HAW-EB4).